The primary structure comprises 443 residues: Protein FAM83A (443 aa).

Residues 311–403 (DSGVSVMTDS…YYQRNYAPDS (93 aa)) form a disordered region. Positions 315-326 (SVMTDSTPESVN) are enriched in polar residues. 2 stretches are compositionally biased toward low complexity: residues 327–344 (TTSE…SNDS) and 388–399 (SNYQPNYYQRNY).

The protein belongs to the FAM83 family.

It localises to the cytoplasm. Functionally, may function in the epidermal growth factor receptor/EGFR signaling pathway. This Xenopus laevis (African clawed frog) protein is Protein FAM83A.